Reading from the N-terminus, the 131-residue chain is Cyclin-dependent kinase 4 inhibitor B (131 aa).

ANK repeat units lie at residues 6–35 (GGDADLANAAARGQVEAVRQLLEAGVDPNR), 39–67 (FGRRPIQVMMMGSARVAELLLLHGADPNC), 72–101 (TLTRPVHDAAREGFLDTLVALHRAGGRLDV), and 105–131 (WGRLPVDLAEERGHRDVARYLRATAGD).

The protein belongs to the CDKN2 cyclin-dependent kinase inhibitor family. As to quaternary structure, heterodimer of CDKN2B with CDK4 or CDK6.

In terms of biological role, interacts strongly with CDK4 and CDK6. Potent inhibitor. Potential effector of TGF-beta induced cell cycle arrest. The chain is Cyclin-dependent kinase 4 inhibitor B (CDKN2B) from Bos taurus (Bovine).